Consider the following 182-residue polypeptide: Ribosome maturation factor RimM (182 aa).

Residues 103–182 enclose the PRC barrel domain; it reads GDDYYWKDLM…VIEADWDPGF (80 aa).

It belongs to the RimM family. Binds ribosomal protein uS19.

It localises to the cytoplasm. An accessory protein needed during the final step in the assembly of 30S ribosomal subunit, possibly for assembly of the head region. Essential for efficient processing of 16S rRNA. May be needed both before and after RbfA during the maturation of 16S rRNA. It has affinity for free ribosomal 30S subunits but not for 70S ribosomes. This Serratia proteamaculans (strain 568) protein is Ribosome maturation factor RimM.